A 223-amino-acid polypeptide reads, in one-letter code: Sporulation-specific protein 19 (223 aa).

The signal sequence occupies residues 1 to 20 (MKKQILIVAAQSILCSTVFG). Asparagine 198 carries the GPI-anchor amidated asparagine lipid modification. Residues 199–223 (ASNFLTPTTVALAVLLTILLFIQAY) constitute a propeptide, removed in mature form.

In terms of processing, the GPI-anchor is attached to the protein in the endoplasmic reticulum and serves to target the protein to the cell surface. There, the glucosamine-inositol phospholipid moiety is cleaved off and the GPI-modified mannoprotein is covalently attached via its lipidless GPI glycan remnant to the 1,6-beta-glucan of the outer cell wall layer.

It is found in the secreted. Its subcellular location is the cell wall. The protein localises to the membrane. In terms of biological role, involved in sporulation. Essential for completion of the nuclear division. The polypeptide is Sporulation-specific protein 19 (SPO19) (Saccharomyces cerevisiae (strain ATCC 204508 / S288c) (Baker's yeast)).